Reading from the N-terminus, the 117-residue chain is Ribosome-binding factor A (117 aa).

The protein belongs to the RbfA family. Monomer. Binds 30S ribosomal subunits, but not 50S ribosomal subunits or 70S ribosomes.

It is found in the cytoplasm. Functionally, one of several proteins that assist in the late maturation steps of the functional core of the 30S ribosomal subunit. Associates with free 30S ribosomal subunits (but not with 30S subunits that are part of 70S ribosomes or polysomes). Required for efficient processing of 16S rRNA. May interact with the 5'-terminal helix region of 16S rRNA. The chain is Ribosome-binding factor A from Blochmanniella floridana.